Here is a 483-residue protein sequence, read N- to C-terminus: HSPB1-associated protein 1 (483 aa).

A disordered region spans residues 1 to 26 (MAAGCEGIAPPTLGERTVGEEGEPVK). Residues 88-208 (ETECSYVDAT…EDTPFLYPTR (121 aa)) form an interaction with HSPB1 region. Positions 124–288 (WAYADYKYFV…HLARVEEAIT (165 aa)) constitute a JmjC domain. Residues 388–416 (LIPVTPASEERGGALEGDSEESVSSNGGH) are disordered.

In terms of assembly, interacts with CRYAB and HSPB1.

Its subcellular location is the cytoplasm. Functionally, may play a role in cellular stress response. This chain is HSPB1-associated protein 1 (Hspbap1), found in Mus musculus (Mouse).